Reading from the N-terminus, the 213-residue chain is Probable nicotinate-nucleotide adenylyltransferase (213 aa).

The protein belongs to the NadD family.

It catalyses the reaction nicotinate beta-D-ribonucleotide + ATP + H(+) = deamido-NAD(+) + diphosphate. Its pathway is cofactor biosynthesis; NAD(+) biosynthesis; deamido-NAD(+) from nicotinate D-ribonucleotide: step 1/1. Its function is as follows. Catalyzes the reversible adenylation of nicotinate mononucleotide (NaMN) to nicotinic acid adenine dinucleotide (NaAD). The protein is Probable nicotinate-nucleotide adenylyltransferase of Citrobacter koseri (strain ATCC BAA-895 / CDC 4225-83 / SGSC4696).